The following is a 206-amino-acid chain: Large ribosomal subunit protein uL3 (206 aa).

The interval 127–151 (SGGPSSHGSKFHRHLGGTGQATTPA) is disordered.

This sequence belongs to the universal ribosomal protein uL3 family. Part of the 50S ribosomal subunit. Forms a cluster with proteins L14 and L19.

One of the primary rRNA binding proteins, it binds directly near the 3'-end of the 23S rRNA, where it nucleates assembly of the 50S subunit. In Borreliella burgdorferi (strain ZS7) (Borrelia burgdorferi), this protein is Large ribosomal subunit protein uL3.